Consider the following 493-residue polypeptide: Na(+)/H(+) antiporter subunit D (493 aa).

A run of 15 helical transmembrane segments spans residues 3-23 (NFVI…IFMT), 31-51 (IFST…VQTV), 77-97 (FASL…LYSF), 107-127 (SFYY…FLTG), 129-149 (LFNM…LIVL), 163-183 (IVFN…LYAV), 203-223 (GLIT…GGIF), 227-247 (FWLP…FGAL), 251-271 (VGLY…TAFT), 274-294 (LMIW…LAYS), 299-319 (IVIY…AVHT), 330-350 (LIHD…LIAL), 370-390 (GWMF…SGFV), 407-427 (ISML…RIFI), and 449-469 (LYPA…TEWV).

It belongs to the CPA3 antiporters (TC 2.A.63) subunit D family. As to quaternary structure, forms a heterooligomeric complex that consists of seven subunits: MrpA, MrpB, MrpC, MrpD, MrpE, MrpF and MrpG.

The protein resides in the cell membrane. Mrp complex is a Na(+)/H(+) antiporter that is considered to be the major Na(+) excretion system in B.subtilis. Has a major role in Na(+) resistance and a minor role in Na(+)- and K(+)-dependent pH homeostasis as compared to TetB. MrpA may be the actual Na(+)/H(+) antiporter, although the six other Mrp proteins are all required for Na(+)/H(+) antiport activity and Na(+) resistance. MrpA is required for initiation of sporulation when external Na(+) concentration increases. Also transports Li(+) but not K(+), Ca(2+) or Mg(2+). This Bacillus subtilis (strain 168) protein is Na(+)/H(+) antiporter subunit D (mrpD).